Consider the following 334-residue polypeptide: GTP 3',8-cyclase (334 aa).

Residues Gly-11–Ala-236 form the Radical SAM core domain. Arg-20 contributes to the GTP binding site. The [4Fe-4S] cluster site is built by Cys-27 and Cys-31. Tyr-33 provides a ligand contact to S-adenosyl-L-methionine. Cys-34 is a [4Fe-4S] cluster binding site. Arg-69 lines the GTP pocket. Gly-73 contacts S-adenosyl-L-methionine. GTP is bound at residue Thr-100. Ser-124 serves as a coordination point for S-adenosyl-L-methionine. Lys-161 contacts GTP. Met-195 is a binding site for S-adenosyl-L-methionine. 2 residues coordinate [4Fe-4S] cluster: Cys-260 and Cys-263. Arg-265–Arg-267 is a binding site for GTP. Residue Cys-277 participates in [4Fe-4S] cluster binding.

Belongs to the radical SAM superfamily. MoaA family. Monomer and homodimer. Requires [4Fe-4S] cluster as cofactor.

The enzyme catalyses GTP + AH2 + S-adenosyl-L-methionine = (8S)-3',8-cyclo-7,8-dihydroguanosine 5'-triphosphate + 5'-deoxyadenosine + L-methionine + A + H(+). It functions in the pathway cofactor biosynthesis; molybdopterin biosynthesis. In terms of biological role, catalyzes the cyclization of GTP to (8S)-3',8-cyclo-7,8-dihydroguanosine 5'-triphosphate. This chain is GTP 3',8-cyclase, found in Pseudomonas putida (strain ATCC 47054 / DSM 6125 / CFBP 8728 / NCIMB 11950 / KT2440).